The chain runs to 249 residues: Seipin homolog (249 aa).

At 1 to 10 (MGYLVKLFKL) the chain is on the cytoplasmic side. A helical transmembrane segment spans residues 11 to 31 (VVWMLVIGLFSIPSLVSYVIF). Residues 32 to 212 (YDTVIPHSVI…GMRWFMYTHK (181 aa)) are Lumenal-facing. Residues 213–233 (VSAFLVFTSLFWFTGITSTII) traverse the membrane as a helical segment. Over 234-249 (TYLIVSSTSETKATRR) the chain is Cytoplasmic.

The protein belongs to the seipin family.

The protein resides in the endoplasmic reticulum membrane. Its function is as follows. Involved in lipid metabolism and lipid droplet (LD) morphology, number, and size. Facilitates initiation of LD formation, and ensures that vectorial budding of LDs from the ER is directed towards the cytoplasm. This is Seipin homolog from Schizosaccharomyces pombe (strain 972 / ATCC 24843) (Fission yeast).